The chain runs to 603 residues: Arginine--tRNA ligase (603 aa).

The 'HIGH' region signature appears at 143–153 (PNIAKEMHVGH).

The protein belongs to the class-I aminoacyl-tRNA synthetase family. As to quaternary structure, monomer.

Its subcellular location is the cytoplasm. It catalyses the reaction tRNA(Arg) + L-arginine + ATP = L-arginyl-tRNA(Arg) + AMP + diphosphate. The chain is Arginine--tRNA ligase from Prochlorococcus marinus (strain MIT 9211).